The primary structure comprises 1357 residues: DNA-directed RNA polymerase subunit beta (1357 aa).

Belongs to the RNA polymerase beta chain family. As to quaternary structure, the RNAP catalytic core consists of 2 alpha, 1 beta, 1 beta' and 1 omega subunit. When a sigma factor is associated with the core the holoenzyme is formed, which can initiate transcription.

The enzyme catalyses RNA(n) + a ribonucleoside 5'-triphosphate = RNA(n+1) + diphosphate. DNA-dependent RNA polymerase catalyzes the transcription of DNA into RNA using the four ribonucleoside triphosphates as substrates. The protein is DNA-directed RNA polymerase subunit beta of Nitrosomonas europaea (strain ATCC 19718 / CIP 103999 / KCTC 2705 / NBRC 14298).